Here is a 507-residue protein sequence, read N- to C-terminus: MTKTYKYEDQLDFIQKSDDVKNLFIIKKGFVPNMNVEGHLFANDNLSKLLFDELKQFTDDPGSFLPALKQLANVAALPGIVKSSIALPDAHSGYGFSIGNVAAFDMDNCNSIVSPGGVGFDINCGVRLLRTNLLYKDIEPIKEQLVQKLFDLIPVGVGCQGKIPCDYGDLDNILEYGMDWSVCSGYSWAEDKEHCEDFGRMIQADPTVVSYRAKKRGLSQIGTLGAGNHYGEVQVVEEIYDEYSAKVMGIDRIGQVCIMTHSGSRGLGHQVASDALVDMENSLNKSKIKVNDKQLACARINSDEGKKYLKGMAAASNYAWVNRSVMTHLTRKAFEEVLKESADDLDMHVVYDVSHNIAKIEDHIVDGKLKRLLLHRKGSTRAFPPYHPLISADFQHIGQPVLVGGTMGTCSYVLTGTQLAMDLTLGSTCHGSGRTLSRNKSRRILDYNEVLNNLKEKGISIRVASPKLVTEEAPESYKDVSEVVQTCHDSGISKKCVKLRPVAVIKG.

Mn(2+) contacts are provided by aspartate 121, cysteine 124, histidine 229, histidine 261, and histidine 355. GMP is bound at residue 228–232; the sequence is NHYGE. GMP-binding positions include 355–356, 404–407, serine 411, 430–433, and lysine 506; these read HN, GGTM, and HGSG. The active-site GMP-histidine intermediate is the histidine 430.

It belongs to the RtcB family. As to quaternary structure, catalytic component of the tRNA-splicing ligase complex. Mn(2+) is required as a cofactor.

The enzyme catalyses a 3'-end 3'-phospho-ribonucleotide-RNA + a 5'-end dephospho-ribonucleoside-RNA + GTP = a ribonucleotidyl-ribonucleotide-RNA + GMP + diphosphate. It catalyses the reaction a 3'-end 2',3'-cyclophospho-ribonucleotide-RNA + a 5'-end dephospho-ribonucleoside-RNA + GTP + H2O = a ribonucleotidyl-ribonucleotide-RNA + GMP + diphosphate + H(+). Its function is as follows. Catalytic subunit of the tRNA-splicing ligase complex that acts by directly joining spliced tRNA halves to mature-sized tRNAs by incorporating the precursor-derived splice junction phosphate into the mature tRNA as a canonical 3',5'-phosphodiester. May act as an RNA ligase with broad substrate specificity, and may function toward other RNAs. The chain is RNA-splicing ligase RtcB homolog from Theileria parva (East coast fever infection agent).